The chain runs to 224 residues: MNQNQDKGQGLLGRKVGMMRIFTDDGDSIPVTVLDVSNNRVTQIKTPDVDGYSAVQVAFGSRRASRVNKASAGHHAKAGVEAGTVLKEFRVAATAASELKVGDVIAASLFEVGQKVDVQGVTIGKGYAGTIKRHHFASGRATHGNSRSHNVPGSIGMAQDPGRVFPGKRMTGHLGDVARTMQNLEIARIDADRQLLLVKGAVPGAKNGQVIVSPAVKVKAKKGA.

N5-methylglutamine is present on glutamine 159.

Belongs to the universal ribosomal protein uL3 family. Part of the 50S ribosomal subunit. Forms a cluster with proteins L14 and L19. Post-translationally, methylated by PrmB.

Functionally, one of the primary rRNA binding proteins, it binds directly near the 3'-end of the 23S rRNA, where it nucleates assembly of the 50S subunit. In Herminiimonas arsenicoxydans, this protein is Large ribosomal subunit protein uL3.